A 1239-amino-acid chain; its full sequence is DNA-directed RNA polymerase subunit beta (1239 aa).

A disordered region spans residues 1182-1239 (IEGAENQLEDKEEKEEEKEENYKEDSDEYDDLREEDVEPDLEELSLDDLDLDDFGDEH). 2 stretches are compositionally biased toward acidic residues: residues 1191 to 1200 (DKEEKEEEKE) and 1206 to 1239 (DSDEYDDLREEDVEPDLEELSLDDLDLDDFGDEH).

This sequence belongs to the RNA polymerase beta chain family. In terms of assembly, the RNAP catalytic core consists of 2 alpha, 1 beta, 1 beta' and 1 omega subunit. When a sigma factor is associated with the core the holoenzyme is formed, which can initiate transcription.

It catalyses the reaction RNA(n) + a ribonucleoside 5'-triphosphate = RNA(n+1) + diphosphate. Its function is as follows. DNA-dependent RNA polymerase catalyzes the transcription of DNA into RNA using the four ribonucleoside triphosphates as substrates. This Clostridium botulinum (strain Loch Maree / Type A3) protein is DNA-directed RNA polymerase subunit beta.